The primary structure comprises 876 residues: Phosphoenolpyruvate carboxylase (876 aa).

Residues H138 and K543 contribute to the active site.

It belongs to the PEPCase type 1 family. Mg(2+) is required as a cofactor.

The catalysed reaction is oxaloacetate + phosphate = phosphoenolpyruvate + hydrogencarbonate. Functionally, forms oxaloacetate, a four-carbon dicarboxylic acid source for the tricarboxylic acid cycle. The polypeptide is Phosphoenolpyruvate carboxylase (Vibrio atlanticus (strain LGP32) (Vibrio splendidus (strain Mel32))).